A 444-amino-acid polypeptide reads, in one-letter code: 23S rRNA (uracil(1939)-C(5))-methyltransferase RlmD (444 aa).

One can recognise a TRAM domain in the interval 5–67 (RSRIDRTPFQ…RHFDEARTVE (63 aa)). Positions 80, 86, 89, and 168 each coordinate [4Fe-4S] cluster. Residues Gln276, Phe305, Asn310, Glu326, Asp353, and Asp374 each coordinate S-adenosyl-L-methionine. The active-site Nucleophile is Cys400.

This sequence belongs to the class I-like SAM-binding methyltransferase superfamily. RNA M5U methyltransferase family. RlmD subfamily.

The enzyme catalyses uridine(1939) in 23S rRNA + S-adenosyl-L-methionine = 5-methyluridine(1939) in 23S rRNA + S-adenosyl-L-homocysteine + H(+). Its function is as follows. Catalyzes the formation of 5-methyl-uridine at position 1939 (m5U1939) in 23S rRNA. This is 23S rRNA (uracil(1939)-C(5))-methyltransferase RlmD from Stenotrophomonas maltophilia (strain K279a).